Reading from the N-terminus, the 482-residue chain is Pentatricopeptide repeat-containing protein At1g74900, mitochondrial (482 aa).

PPR repeat units lie at residues Asp90–Pro124, Ser125–Gln159, Asp160–Arg190, Asp194–Pro228, Asn229–Ile263, Asp264–Pro298, Ser299–Pro333, Asn334–Pro368, Asn369–Pro403, Asn404–Pro441, and Arg442–Leu476.

It belongs to the PPR family. P subfamily.

The protein localises to the mitochondrion. Functionally, required for the trans-splicing of intron 1 of the mitochondrial nad1 transcript encoding the ND1 subunit of the mitochondrial membrane respiratory chain NADH dehydrogenase (Complex I). In Arabidopsis thaliana (Mouse-ear cress), this protein is Pentatricopeptide repeat-containing protein At1g74900, mitochondrial (OTP43).